Reading from the N-terminus, the 395-residue chain is Carbamoyl phosphate synthase small chain (395 aa).

The CPSase stretch occupies residues 1 to 192 (MTYNLHPAIL…LQYKTDKMYG (192 aa)). Ser50, Gly244, and Gly246 together coordinate L-glutamine. The Glutamine amidotransferase type-1 domain occupies 196–383 (KIILIDFGVK…INLIKHFKQY (188 aa)). Cys273 functions as the Nucleophile in the catalytic mechanism. The L-glutamine site is built by Met274, Gln277, Asn313, Gly315, and Phe316. Residues His356 and Glu358 contribute to the active site.

Belongs to the CarA family. In terms of assembly, composed of two chains; the small (or glutamine) chain promotes the hydrolysis of glutamine to ammonia, which is used by the large (or ammonia) chain to synthesize carbamoyl phosphate. Tetramer of heterodimers (alpha,beta)4.

It localises to the plastid. Its subcellular location is the chloroplast. The enzyme catalyses hydrogencarbonate + L-glutamine + 2 ATP + H2O = carbamoyl phosphate + L-glutamate + 2 ADP + phosphate + 2 H(+). It carries out the reaction L-glutamine + H2O = L-glutamate + NH4(+). It functions in the pathway amino-acid biosynthesis; L-arginine biosynthesis; carbamoyl phosphate from bicarbonate: step 1/1. Its pathway is pyrimidine metabolism; UMP biosynthesis via de novo pathway; (S)-dihydroorotate from bicarbonate: step 1/3. Small subunit of the glutamine-dependent carbamoyl phosphate synthetase (CPSase). CPSase catalyzes the formation of carbamoyl phosphate from the ammonia moiety of glutamine, carbonate, and phosphate donated by ATP, constituting the first step of 2 biosynthetic pathways, one leading to arginine and/or urea and the other to pyrimidine nucleotides. The small subunit (glutamine amidotransferase) binds and cleaves glutamine to supply the large subunit with the substrate ammonia. The sequence is that of Carbamoyl phosphate synthase small chain from Gracilaria tenuistipitata var. liui (Red alga).